The following is a 588-amino-acid chain: Arginine--tRNA ligase (588 aa).

The 'HIGH' region motif lies at 124–134 (PNVAKPMHVGH).

Belongs to the class-I aminoacyl-tRNA synthetase family. In terms of assembly, monomer.

The protein localises to the cytoplasm. The enzyme catalyses tRNA(Arg) + L-arginine + ATP = L-arginyl-tRNA(Arg) + AMP + diphosphate. This chain is Arginine--tRNA ligase, found in Maricaulis maris (strain MCS10) (Caulobacter maris).